The sequence spans 741 residues: Multifunctional procollagen lysine hydroxylase and glycosyltransferase LH3 (741 aa).

Positions 1–27 (MAASVPEPRLLLLLLLLLPPLPPVTSA) are cleaved as a signal peptide. A required for glycosyltransferase activity region spans residues 28 to 293 (SDRPRGANPV…FCNLNRRTLP (266 aa)). A UDP-binding site is contributed by 47-49 (VAT). Asn-66 carries an N-linked (GlcNAc...) asparagine glycan. Mn(2+) contacts are provided by Asp-115, Asp-118, and His-256. 115 to 117 (DSY) is a UDP binding site. A UDP-binding site is contributed by 259–262 (GPTK). 2 disulfides stabilise this stretch: Cys-282-Cys-285 and Cys-382-Cys-388. The accessory region stretch occupies residues 298–523 (PPRVLLAVFV…EFGRLLSTSH (226 aa)). N-linked (GlcNAc...) asparagine glycosylation is present at Asn-551. The cysteines at positions 566 and 701 are disulfide-linked. 2-oxoglutarate-binding residues include Arg-602 and Tyr-659. Residues 650–741 (RAVMNFVVRY…RYIMVSFVDP (92 aa)) enclose the Fe2OG dioxygenase domain. The Fe cation site is built by His-670 and Asp-672. An important for dimerization region spans residues 675–718 (TFTLNVALNHKGVDYEGGGCRFLRYDCRVSSPRKGWALLHPGRL). Asn-679 contributes to the 2-oxoglutarate binding site. Fe cation is bound at residue His-722. Arg-732 serves as a coordination point for 2-oxoglutarate.

As to quaternary structure, homodimer. The cofactor is Fe(2+). L-ascorbate is required as a cofactor. Requires Mn(2+) as cofactor. As to expression, detected in heart and bone.

The protein resides in the rough endoplasmic reticulum. It localises to the endoplasmic reticulum lumen. The protein localises to the endoplasmic reticulum membrane. Its subcellular location is the secreted. It is found in the extracellular space. The catalysed reaction is L-lysyl-[collagen] + 2-oxoglutarate + O2 = (5R)-5-hydroxy-L-lysyl-[collagen] + succinate + CO2. It carries out the reaction (5R)-5-hydroxy-L-lysyl-[collagen] + UDP-alpha-D-galactose = (5R)-5-O-(beta-D-galactosyl)-5-hydroxy-L-lysyl-[collagen] + UDP + H(+). It catalyses the reaction (5R)-5-O-(beta-D-galactosyl)-5-hydroxy-L-lysyl-[collagen] + UDP-alpha-D-glucose = (5R)-5-O-[alpha-D-glucosyl-(1-&gt;2)-beta-D-galactosyl]-5-hydroxy-L-lysyl-[collagen] + UDP + H(+). Multifunctional enzyme that catalyzes a series of post-translational modifications on Lys residues in procollagen. Plays a redundant role in catalyzing the formation of hydroxylysine residues in -Xaa-Lys-Gly- sequences in collagens. Plays a redundant role in catalyzing the transfer of galactose onto hydroxylysine groups, giving rise to galactosyl 5-hydroxylysine. Has an essential role by catalyzing the subsequent transfer of glucose moieties, giving rise to 1,2-glucosylgalactosyl-5-hydroxylysine residues. Catalyzes hydroxylation and glycosylation of Lys residues in the MBL1 collagen-like domain, giving rise to hydroxylysine and 1,2-glucosylgalactosyl-5-hydroxylysine residues. Catalyzes hydroxylation and glycosylation of Lys residues in the ADIPOQ collagen-like domain, giving rise to hydroxylysine and 1,2-glucosylgalactosyl-5-hydroxylysine residues. Essential for normal biosynthesis and secretion of type IV collagens. Essential for normal formation of basement membranes. This chain is Multifunctional procollagen lysine hydroxylase and glycosyltransferase LH3 (Plod3), found in Rattus norvegicus (Rat).